The sequence spans 457 residues: ATP synthase subunit beta (457 aa).

An ATP-binding site is contributed by 147 to 154 (GGAGVGKT).

This sequence belongs to the ATPase alpha/beta chains family. In terms of assembly, F-type ATPases have 2 components, CF(1) - the catalytic core - and CF(0) - the membrane proton channel. CF(1) has five subunits: alpha(3), beta(3), gamma(1), delta(1), epsilon(1). CF(0) has three main subunits: a(1), b(2) and c(9-12). The alpha and beta chains form an alternating ring which encloses part of the gamma chain. CF(1) is attached to CF(0) by a central stalk formed by the gamma and epsilon chains, while a peripheral stalk is formed by the delta and b chains.

The protein resides in the cell inner membrane. It catalyses the reaction ATP + H2O + 4 H(+)(in) = ADP + phosphate + 5 H(+)(out). Its function is as follows. Produces ATP from ADP in the presence of a proton gradient across the membrane. The catalytic sites are hosted primarily by the beta subunits. This is ATP synthase subunit beta from Pasteurella multocida (strain Pm70).